Consider the following 988-residue polypeptide: Transcription regulator srbA precursor (988 aa).

The Cytoplasmic segment spans residues 1–427; it reads MSTPGIGGDF…SSWHARAISH (427 aa). Disordered stretches follow at residues 53–85 and 108–169; these read AFPETANASPSSPFDLAFISPSASSGREASDAM and GDLN…KKRA. The span at 125–136 shows a compositional bias: low complexity; sequence SLSVHSNSPLSS. The basic motif stretch occupies residues 165 to 178; it reads SKKRAHNVIEKRYR. The 72-residue stretch at 165 to 236 folds into the bHLH domain; that stretch reads SKKRAHNVIE…SKATEYIRHL (72 aa). The segment at 179–236 is helix-loop-helix motif; it reads ANLNEKIAELRDSVPSLRASYKQANGNSGDDDDDGVTSASKLNKASILSKATEYIRHL. Residues 226–260 are a coiled coil; the sequence is LSKATEYIRHLEIRNKRLEEENTALKIRLRQLDKA. The span at 267 to 291 shows a compositional bias: polar residues; sequence SAASVSSPSDCTVSTESGASSSPSV. The disordered stretch occupies residues 267 to 313; sequence SAASVSSPSDCTVSTESGASSSPSVFSHAEDVPSDHSPTSSHPPEGL. Residues 301–310 show a composition bias toward low complexity; it reads DHSPTSSHPP. Residues 428 to 447 form a helical membrane-spanning segment; the sequence is FLMLAILVVGSAFIVFVYLF. The Lumenal portion of the chain corresponds to 448-988; it reads NSDPRRQYSA…SDNLLLSDES (541 aa). Low complexity predominate over residues 866 to 881; the sequence is PPSPMSKASDMLSSSS. Residues 866–900 are disordered; it reads PPSPMSKASDMLSSSSDDGEDGASQRNNNIIPHPM.

In low oxygen or sterol conditions, undergoes proteolytic cleavage by rhomboid-type protease rbdB and is released as soluble transcription factor from the membrane.

The protein localises to the endoplasmic reticulum membrane. It localises to the nucleus. Precursor of the transcription factor srbA, which is embedded in the endoplasmic reticulum membrane. Low oxygen or sterol conditions promote processing of this form, releasing the transcription factor form that translocates into the nucleus and activates transcription of genes required for adaptation to anaerobic growth. In terms of biological role, transcription factor that regulates sterol biosynthesis and hyphal morphology. Plays a critical role in ergosterol biosynthesis, resistance to the azole class of antifungal drugs, and in maintenance of cell polarity. Directly binds erg11A/cyp51A upstream DNA sequence at tandem repeats, called TR34 and TR46, that produce duplicated binding sites. Also mediates regulation of iron acquisition in response to hypoxia and low iron conditions via activation of extra- and intracellular siderophore production. Positively regulates the expression of the other hypoxia adaptation key transcription factor srbB. Required for the azole-sensing and response to azole stress. Binds the high-affinity sites 5'-A-T-C-G/A-T/G-A/G-C/T-G/C-A-T-3' of target promoters. Required for virulence in murine models of invasive pulmonary aspergillosis (IPA). This Aspergillus fumigatus (strain ATCC MYA-4609 / CBS 101355 / FGSC A1100 / Af293) (Neosartorya fumigata) protein is Transcription regulator srbA precursor.